The following is a 191-amino-acid chain: Acireductone dioxygenase 2 (191 aa).

H102, H104, E108, and H146 together coordinate Fe(2+). Residues H102, H104, E108, and H146 each contribute to the Ni(2+) site.

It belongs to the acireductone dioxygenase (ARD) family. Monomer. Fe(2+) serves as cofactor. Ni(2+) is required as a cofactor.

The enzyme catalyses 1,2-dihydroxy-5-(methylsulfanyl)pent-1-en-3-one + O2 = 3-(methylsulfanyl)propanoate + CO + formate + 2 H(+). The catalysed reaction is 1,2-dihydroxy-5-(methylsulfanyl)pent-1-en-3-one + O2 = 4-methylsulfanyl-2-oxobutanoate + formate + 2 H(+). The protein operates within amino-acid biosynthesis; L-methionine biosynthesis via salvage pathway; L-methionine from S-methyl-5-thio-alpha-D-ribose 1-phosphate: step 5/6. In terms of biological role, catalyzes 2 different reactions between oxygen and the acireductone 1,2-dihydroxy-3-keto-5-methylthiopentene (DHK-MTPene) depending upon the metal bound in the active site. Fe-containing acireductone dioxygenase (Fe-ARD) produces formate and 2-keto-4-methylthiobutyrate (KMTB), the alpha-ketoacid precursor of methionine in the methionine recycle pathway. Ni-containing acireductone dioxygenase (Ni-ARD) produces methylthiopropionate, carbon monoxide and formate, and does not lie on the methionine recycle pathway. This Nocardia farcinica (strain IFM 10152) protein is Acireductone dioxygenase 2.